The primary structure comprises 156 residues: Transcriptional regulator MraZ (156 aa).

SpoVT-AbrB domains follow at residues 7-64 (KERH…EPSV) and 93-136 (LEMV…EPAR).

This sequence belongs to the MraZ family. In terms of assembly, forms oligomers.

The protein resides in the cytoplasm. It is found in the nucleoid. The sequence is that of Transcriptional regulator MraZ from Chlorobium phaeovibrioides (strain DSM 265 / 1930) (Prosthecochloris vibrioformis (strain DSM 265)).